The sequence spans 290 residues: Prepilin leader peptidase/N-methyltransferase (290 aa).

The helical transmembrane segment at 13–33 (AFVLCTILLGLLVGSFLNVVV) threads the bilayer. The Zn(2+) site is built by Cys72, Cys75, Cys97, and Cys100. 5 consecutive transmembrane segments (helical) span residues 128-148 (FTWQ…MSLI), 158-178 (VLVL…LFAS), 183-203 (LFGA…FKLV), 228-248 (ILPL…VIML), and 261-276 (FGPY…LLWG).

This sequence belongs to the peptidase A24 family. Zn(2+) serves as cofactor.

Its subcellular location is the cell inner membrane. It carries out the reaction Typically cleaves a -Gly-|-Phe- bond to release an N-terminal, basic peptide of 5-8 residues from type IV prepilin, and then N-methylates the new N-terminal amino group, the methyl donor being S-adenosyl-L-methionine.. Its function is as follows. Plays an essential role in type IV pili and type II pseudopili formation by proteolytically removing the leader sequence from substrate proteins and subsequently monomethylating the alpha-amino group of the newly exposed N-terminal phenylalanine. Substrates include proteins required for pilus biogenesis PilE, PilV, PilW, and PilX as well as some components of the type II general secretory apparatus GspG, GspH, GspI and GspJ. This chain is Prepilin leader peptidase/N-methyltransferase (pilD), found in Pseudomonas aeruginosa (strain ATCC 15692 / DSM 22644 / CIP 104116 / JCM 14847 / LMG 12228 / 1C / PRS 101 / PAO1).